Here is a 260-residue protein sequence, read N- to C-terminus: 2-amino-3,7-dideoxy-D-threo-hept-6-ulosonate synthase 1 (260 aa).

Asp-26 (proton acceptor) is an active-site residue. 1-deoxy-D-threo-hexo-2,5-diulose 6-phosphate contacts are provided by residues 26 to 30 (DHGIT) and 144 to 146 (YPR). Tyr-144 functions as the Proton donor in the catalytic mechanism. Lys-172 functions as the Schiff-base intermediate with substrate in the catalytic mechanism. 1-deoxy-D-threo-hexo-2,5-diulose 6-phosphate is bound by residues 194–195 (GG) and 221–222 (GR).

It belongs to the DeoC/FbaB aldolase family. ADHS subfamily. Homodecamer.

It carries out the reaction 1-deoxy-D-threo-hexo-2,5-diulose 6-phosphate + L-aspartate 4-semialdehyde = 2,3-dioxopropyl phosphate + 2-amino-2,3,7-trideoxy-D-lyxo-hept-6-ulosonate. In terms of biological role, catalyzes a transaldol reaction between 6-deoxy-5-ketofructose 1-phosphate (DKFP) and L-aspartate semialdehyde (ASA) with an elimination of hydroxypyruvaldehyde phosphate to yield 2-amino-3,7-dideoxy-D-threo-hept-6-ulosonate (ADH). Plays a key role in an alternative pathway of the biosynthesis of 3-dehydroquinate (DHQ), which is involved in the canonical pathway for the biosynthesis of aromatic amino acids. The chain is 2-amino-3,7-dideoxy-D-threo-hept-6-ulosonate synthase 1 from Archaeoglobus fulgidus (strain ATCC 49558 / DSM 4304 / JCM 9628 / NBRC 100126 / VC-16).